The following is a 263-amino-acid chain: Antigen 10-3 (263 aa).

Residues 1 to 21 (MNIYLIGILCIVGLIISQGST) form the signal peptide. Residues 70–207 (GNKKDKQPTQ…QINDGTSDKP (138 aa)) form a disordered region. Positions 78 to 90 (TQKTTPKPTTPKQ) are enriched in low complexity. A run of 5 repeats spans residues 81 to 107 (TTPK…TIKR), 108 to 134 (TTPK…TIKR), 135 to 161 (TTPK…TIKR), 162 to 188 (TTPK…TIKR), and 189 to 206 (TTPK…TSDK). A 5 X 27 AA tandem repeats region spans residues 81 to 189 (TTPKPTTPKQ…TSDTHTIKRT (109 aa)). Composition is skewed to basic and acidic residues over residues 95-104 (TSDKTSDTHT), 122-131 (TSDKTSDTHT), 149-158 (TSDKTSDTHT), and 176-185 (TSDKTSDTHT).

The protein is Antigen 10-3 of Schistosoma mansoni (Blood fluke).